We begin with the raw amino-acid sequence, 530 residues long: MNNYNNGDYKGGREQHFGGNNNYNRGYGGNGGFGGNRYNERVELTTPDWDLESLPKFEKNFYTEHPDVAARSDKDIAAFRNEHQMSCLGSDIPHPITTFDEAGFPEYVLNEVKAQGFPSPTAIQCQGWPMALSGRDMVGIAATGSGKTLSYCLPAIVHINAQPLLSPGDGPVVLVLAPTRELAVQIQQECSKFGSSSRIRNTCVYGGAPKGQQIRDLARGVEIVIATPGRLIDMLEMGKTNLKRVTYLVLDEADRMLDMGFEPQIRKIVDQIRPDRQTLMWSATWPKEVQNLARDYLQDPIQVRIGSLELAASHTITQVVEVISEYEKRDRLVKHLETATTEKESKVLIFASTKKTCDEVTSYLRADGWPALAIHGDKQQSERDWVLREFKTGKSPIMVATDVAARGIDVKGINFVINFDMPGNIEDYVHRIGRTGRGGATGTAVSFFTDGNNKLGGDLCKIMREAKQTIPPELQRFDRKSFGAHIRYGGGRGGRGGYGRGRGGYGGRGGYGQRNYQTGSNQAPLSNRRF.

The interval 1 to 23 (MNNYNNGDYKGGREQHFGGNNNY) is disordered. The short motif at 97–125 (TTFDEAGFPEYVLNEVKAQGFPSPTAIQC) is the Q motif element. Residues 128–303 (WPMALSGRDM…RDYLQDPIQV (176 aa)) form the Helicase ATP-binding domain. 141-148 (AATGSGKT) serves as a coordination point for ATP. The DEAD box motif lies at 251 to 254 (DEAD). The Helicase C-terminal domain occupies 318-478 (QVVEVISEYE…TIPPELQRFD (161 aa)). Residues 493–512 (GGRGGYGRGRGGYGGRGGYG) are compositionally biased toward gly residues. Positions 493–530 (GGRGGYGRGRGGYGGRGGYGQRNYQTGSNQAPLSNRRF) are disordered. Over residues 514 to 530 (RNYQTGSNQAPLSNRRF) the composition is skewed to polar residues.

Belongs to the DEAD box helicase family. DDX5/DBP2 subfamily. In terms of assembly, associates with polysomes.

The protein resides in the cytoplasm. Its subcellular location is the nucleus. It catalyses the reaction ATP + H2O = ADP + phosphate + H(+). Functionally, ATP-dependent RNA helicase involved nonsense-mediated mRNA decay and ribosome biogenesis through rRNA processing. This chain is ATP-dependent RNA helicase DBP2 (DBP2), found in Scheffersomyces stipitis (strain ATCC 58785 / CBS 6054 / NBRC 10063 / NRRL Y-11545) (Yeast).